We begin with the raw amino-acid sequence, 567 residues long: R-linalool synthase QH1, chloroplastic (567 aa).

The N-terminal 24 residues, glycine 1–alanine 24, are a transit peptide targeting the chloroplast. Residues arginine 282, aspartate 319, aspartate 323, arginine 460, and aspartate 463 each contribute to the (2E)-geranyl diphosphate site. Residues aspartate 319 and aspartate 323 each coordinate Mg(2+). Residues aspartate 319–aspartate 323 carry the DDXXD motif motif. Positions 463, 467, and 471 each coordinate Mg(2+).

The protein belongs to the terpene synthase family. Tpsb subfamily. Requires Mg(2+) as cofactor. Highly expressed in leaves and lower levels in inflorescences. Not detected in stems, stem epidermis, stem stele or roots.

It is found in the plastid. Its subcellular location is the chloroplast. It carries out the reaction (2E)-geranyl diphosphate + H2O = (R)-linalool + diphosphate. The protein operates within secondary metabolite biosynthesis; terpenoid biosynthesis. In terms of biological role, monoterpene synthase that catalyzes the formation of (3R)-linalool from geranyl diphosphate, but not from isopentenyl diphosphate, dimethylallyl diphosphate, chrysanthemyl diphosphate, farnesyl diphosphate, (+)-copalyl diphosphate or geranylgeranyl diphosphate. In Artemisia annua (Sweet wormwood), this protein is R-linalool synthase QH1, chloroplastic (QH1).